The sequence spans 294 residues: Cytidine deaminase (294 aa).

2 consecutive CMP/dCMP-type deaminase domains span residues 48–168 (DEDA…FGPK) and 186–294 (LTGD…VLLG). 89 to 91 (NME) serves as a coordination point for substrate. His102 is a binding site for Zn(2+). Glu104 acts as the Proton donor in catalysis. Cys129 and Cys132 together coordinate Zn(2+).

The protein belongs to the cytidine and deoxycytidylate deaminase family. As to quaternary structure, homodimer. Requires Zn(2+) as cofactor.

It catalyses the reaction cytidine + H2O + H(+) = uridine + NH4(+). The enzyme catalyses 2'-deoxycytidine + H2O + H(+) = 2'-deoxyuridine + NH4(+). In terms of biological role, this enzyme scavenges exogenous and endogenous cytidine and 2'-deoxycytidine for UMP synthesis. This is Cytidine deaminase from Salmonella agona (strain SL483).